The primary structure comprises 576 residues: Aspartate--tRNA ligase (576 aa).

Glu171 contributes to the L-aspartate binding site. The interval 195 to 198 is aspartate; it reads QLFK. Position 217 (Arg217) interacts with L-aspartate. ATP contacts are provided by residues 217-219 and Gln226; that span reads RDE. His450 serves as a coordination point for L-aspartate. Glu484 lines the ATP pocket. Arg491 is an L-aspartate binding site. 536–539 lines the ATP pocket; sequence GLDR.

This sequence belongs to the class-II aminoacyl-tRNA synthetase family. Type 1 subfamily. In terms of assembly, homodimer.

The protein localises to the cytoplasm. It carries out the reaction tRNA(Asp) + L-aspartate + ATP = L-aspartyl-tRNA(Asp) + AMP + diphosphate. In terms of biological role, catalyzes the attachment of L-aspartate to tRNA(Asp) in a two-step reaction: L-aspartate is first activated by ATP to form Asp-AMP and then transferred to the acceptor end of tRNA(Asp). The polypeptide is Aspartate--tRNA ligase (Buchnera aphidicola subsp. Baizongia pistaciae (strain Bp)).